Reading from the N-terminus, the 51-residue chain is Small ribosomal subunit protein eS31 (51 aa).

Zn(2+) contacts are provided by cysteine 22, cysteine 25, cysteine 40, and cysteine 43. Residues 22–43 (CPRCGPGVFMADHGDRWACGRC) form a C4-type zinc finger.

Belongs to the eukaryotic ribosomal protein eS31 family. In terms of assembly, part of the 30S ribosomal subunit. The cofactor is Zn(2+).

In Pyrococcus abyssi (strain GE5 / Orsay), this protein is Small ribosomal subunit protein eS31.